Reading from the N-terminus, the 93-residue chain is MDPRDVIIKPWITEQSTDQMEENKYTFVVAKDANKTQIKDAVQKLFGVKVKQVNTMNMKGKPKRLGIYQGKTPSWKKAIITLTDDSKAIDLFE.

The protein belongs to the universal ribosomal protein uL23 family. As to quaternary structure, part of the 50S ribosomal subunit. Contacts protein L29, and trigger factor when it is bound to the ribosome.

Functionally, one of the early assembly proteins it binds 23S rRNA. One of the proteins that surrounds the polypeptide exit tunnel on the outside of the ribosome. Forms the main docking site for trigger factor binding to the ribosome. The polypeptide is Large ribosomal subunit protein uL23 (Natranaerobius thermophilus (strain ATCC BAA-1301 / DSM 18059 / JW/NM-WN-LF)).